The chain runs to 104 residues: L-rhamnose mutarotase (104 aa).

Tyr18 contributes to the substrate binding site. His22 acts as the Proton donor in catalysis. Residues Tyr41 and 76–77 (WW) each bind substrate.

It belongs to the rhamnose mutarotase family. Homodimer.

The protein localises to the cytoplasm. It catalyses the reaction alpha-L-rhamnose = beta-L-rhamnose. It participates in carbohydrate metabolism; L-rhamnose metabolism. Its function is as follows. Involved in the anomeric conversion of L-rhamnose. This is L-rhamnose mutarotase from Escherichia coli O127:H6 (strain E2348/69 / EPEC).